The chain runs to 757 residues: Dapper homolog 2 (757 aa).

Residues 1 to 281 (MWAPSGQGPA…QSPLFALPKE (281 aa)) form an inhibition of Nodal signaling region. The stretch at 55–107 (RGQELRLEAALTALREQLSRLRRQDAGLKTHLDQLDQQISELQLDVSRSSCEA) forms a coiled coil. Disordered regions lie at residues 486 to 540 (RRRV…CSES), 584 to 684 (RWQS…EGCF), and 696 to 728 (AEAGQGGWAWPRVPPQQPSRAPGNTRPPLPPVP). Composition is skewed to basic and acidic residues over residues 505–516 (ERQRVTERDPSR) and 631–644 (ACARCESDPSEHSA). Polar residues predominate over residues 645–656 (DCTSLYHSTIAE). The segment covering 664-673 (SDHTANRFGD) has biased composition (basic and acidic residues). The PDZ-binding signature appears at 754-757 (MTMV).

The protein belongs to the dapper family. In terms of assembly, can form homodimers and heterodimers with DACT1 or DACT3. Interacts with CSNK1D, PKA catalytic subunit, PKC-type kinase, CSNK2B, DVL1, DVL2, DVL3, VANGL1, VANGL2, TGFBR1, CTNNB1, CTNND2, CTNND1, LEF1, TCF7, TCF7L1 and HDAC1. In terms of tissue distribution, expressed in kidney (inner medullary collecting duct). Expressed in epidermal keratinocytes and hair follicles.

Its function is as follows. Involved in regulation of intracellular signaling pathways during development. Negatively regulates the Nodal signaling pathway, possibly by promoting the lysosomal degradation of Nodal receptors, such as TGFBR1. May be involved in control of the morphogenetic behavior of kidney ureteric bud cells by keeping cells epithelial and restraining their mesenchymal character. May play an inhibitory role in the re-epithelialization of skin wounds by attenuating TGF-beta signaling. In Mus musculus (Mouse), this protein is Dapper homolog 2 (Dact2).